Reading from the N-terminus, the 234-residue chain is Small ribosomal subunit protein uS3 (234 aa).

Positions 39–108 constitute a KH type-2 domain; the sequence is IRKFVKKKLF…TVIVNVVEVK (70 aa). The disordered stretch occupies residues 212–234; that stretch reads KGKNEETNNETADNSRGRRREAK.

It belongs to the universal ribosomal protein uS3 family. Part of the 30S ribosomal subunit. Forms a tight complex with proteins S10 and S14.

Functionally, binds the lower part of the 30S subunit head. Binds mRNA in the 70S ribosome, positioning it for translation. This Alkaliphilus metalliredigens (strain QYMF) protein is Small ribosomal subunit protein uS3.